The primary structure comprises 225 residues: Elongation factor 1-beta (225 aa).

The 83-residue stretch at glycine 2–valine 84 folds into the GST C-terminal domain. Position 7 is an N6-acetyllysine (lysine 7). 2 positions are modified to phosphoserine: serine 8 and serine 42. The interval lysine 78 to alanine 115 is disordered. A phosphothreonine mark is found at threonine 88 and threonine 93. Phosphoserine occurs at positions 95 and 106. Positions lysine 96–glutamate 113 are enriched in acidic residues. Residue lysine 147 forms a Glycyl lysine isopeptide (Lys-Gly) (interchain with G-Cter in SUMO2) linkage. The residue at position 174 (serine 174) is a Phosphoserine.

This sequence belongs to the EF-1-beta/EF-1-delta family. In terms of assembly, EF-1 is composed of 4 subunits: alpha, beta (alpha subunit of the eEF1B subcomplex), delta (beta subunit of the eEF1B subcomplex), and gamma (gamma subunit of the eEF1B subcomplex). Interacts with elongation factor EEF1A1. Phosphorylation affects the GDP/GTP exchange rate.

Functionally, catalytic subunit of the guanine nucleotide exchange factor (GEF) (eEF1B subcomplex) of the eukaryotic elongation factor 1 complex (eEF1). Stimulates the exchange of GDP for GTP on elongation factor 1A (eEF1A), probably by displacing GDP from the nucleotide binding pocket in eEF1A. The chain is Elongation factor 1-beta (EEF1B2) from Homo sapiens (Human).